The chain runs to 502 residues: Aspartyl/glutamyl-tRNA(Asn/Gln) amidotransferase subunit B (502 aa).

This sequence belongs to the GatB/GatE family. GatB subfamily. As to quaternary structure, heterotrimer of A, B and C subunits.

The catalysed reaction is L-glutamyl-tRNA(Gln) + L-glutamine + ATP + H2O = L-glutaminyl-tRNA(Gln) + L-glutamate + ADP + phosphate + H(+). It carries out the reaction L-aspartyl-tRNA(Asn) + L-glutamine + ATP + H2O = L-asparaginyl-tRNA(Asn) + L-glutamate + ADP + phosphate + 2 H(+). Functionally, allows the formation of correctly charged Asn-tRNA(Asn) or Gln-tRNA(Gln) through the transamidation of misacylated Asp-tRNA(Asn) or Glu-tRNA(Gln) in organisms which lack either or both of asparaginyl-tRNA or glutaminyl-tRNA synthetases. The reaction takes place in the presence of glutamine and ATP through an activated phospho-Asp-tRNA(Asn) or phospho-Glu-tRNA(Gln). This is Aspartyl/glutamyl-tRNA(Asn/Gln) amidotransferase subunit B from Brucella suis (strain ATCC 23445 / NCTC 10510).